The chain runs to 175 residues: Bifunctional protein PyrR (175 aa).

Substrate-binding positions include 40–41 (TR), R85, 102–110 (DDVLYTGRT), R135, and V159. The PRPP-binding signature appears at 98 to 110 (VVIIDDVLYTGRT).

It belongs to the purine/pyrimidine phosphoribosyltransferase family. PyrR subfamily. As to quaternary structure, homodimer and homohexamer; in equilibrium.

It catalyses the reaction UMP + diphosphate = 5-phospho-alpha-D-ribose 1-diphosphate + uracil. Functionally, regulates transcriptional attenuation of the pyrimidine nucleotide (pyr) operon by binding in a uridine-dependent manner to specific sites on pyr mRNA. This disrupts an antiterminator hairpin in the RNA and favors formation of a downstream transcription terminator, leading to a reduced expression of downstream genes. Its function is as follows. Also displays a weak uracil phosphoribosyltransferase activity which is not physiologically significant. This chain is Bifunctional protein PyrR, found in Staphylococcus epidermidis (strain ATCC 35984 / DSM 28319 / BCRC 17069 / CCUG 31568 / BM 3577 / RP62A).